The following is a 297-amino-acid chain: ATP synthase gamma chain (297 aa).

This sequence belongs to the ATPase gamma chain family. In terms of assembly, F-type ATPases have 2 components, CF(1) - the catalytic core - and CF(0) - the membrane proton channel. CF(1) has five subunits: alpha(3), beta(3), gamma(1), delta(1), epsilon(1). CF(0) has three main subunits: a, b and c.

It is found in the cell membrane. Produces ATP from ADP in the presence of a proton gradient across the membrane. The gamma chain is believed to be important in regulating ATPase activity and the flow of protons through the CF(0) complex. This is ATP synthase gamma chain from Arthrobacter sp. (strain FB24).